The following is a 336-amino-acid chain: tRNA N6-adenosine threonylcarbamoyltransferase (336 aa).

H114 and H118 together coordinate Fe cation. Substrate contacts are provided by residues 136 to 140 (LVSGG), D169, G182, D186, and N275. Residue D302 coordinates Fe cation.

The protein belongs to the KAE1 / TsaD family. Fe(2+) is required as a cofactor.

It is found in the cytoplasm. The catalysed reaction is L-threonylcarbamoyladenylate + adenosine(37) in tRNA = N(6)-L-threonylcarbamoyladenosine(37) in tRNA + AMP + H(+). In terms of biological role, required for the formation of a threonylcarbamoyl group on adenosine at position 37 (t(6)A37) in tRNAs that read codons beginning with adenine. Is involved in the transfer of the threonylcarbamoyl moiety of threonylcarbamoyl-AMP (TC-AMP) to the N6 group of A37, together with TsaE and TsaB. TsaD likely plays a direct catalytic role in this reaction. The protein is tRNA N6-adenosine threonylcarbamoyltransferase of Streptococcus agalactiae serotype Ia (strain ATCC 27591 / A909 / CDC SS700).